The sequence spans 273 residues: Rhamnulose-1-phosphate aldolase (273 aa).

Glu-117 is an active-site residue. 3 residues coordinate Zn(2+): His-140, His-142, and His-211.

This sequence belongs to the aldolase class II family. RhaD subfamily. Zn(2+) is required as a cofactor.

Its subcellular location is the cytoplasm. It carries out the reaction L-rhamnulose 1-phosphate = (S)-lactaldehyde + dihydroxyacetone phosphate. Its pathway is carbohydrate degradation; L-rhamnose degradation; glycerone phosphate from L-rhamnose: step 3/3. Catalyzes the reversible cleavage of L-rhamnulose-1-phosphate to dihydroxyacetone phosphate (DHAP) and L-lactaldehyde. The chain is Rhamnulose-1-phosphate aldolase from Listeria innocua serovar 6a (strain ATCC BAA-680 / CLIP 11262).